Consider the following 208-residue polypeptide: Ribosomal RNA large subunit methyltransferase E (208 aa).

S-adenosyl-L-methionine contacts are provided by Gly63, Trp65, Asp83, Asp99, and Asp124. Lys164 serves as the catalytic Proton acceptor.

It belongs to the class I-like SAM-binding methyltransferase superfamily. RNA methyltransferase RlmE family.

The protein localises to the cytoplasm. The enzyme catalyses uridine(2552) in 23S rRNA + S-adenosyl-L-methionine = 2'-O-methyluridine(2552) in 23S rRNA + S-adenosyl-L-homocysteine + H(+). Specifically methylates the uridine in position 2552 of 23S rRNA at the 2'-O position of the ribose in the fully assembled 50S ribosomal subunit. This Salmonella paratyphi A (strain ATCC 9150 / SARB42) protein is Ribosomal RNA large subunit methyltransferase E.